A 130-amino-acid chain; its full sequence is Spore coat protein M (130 aa).

Involved in spore outer coat assembly. May be part of a cross-linked insoluble skeleton that surrounds the spore, serves as a matrix for the assembly of additional outer coat material, and confers structural stability to the final structure. The sequence is that of Spore coat protein M (cotM) from Bacillus subtilis (strain 168).